The chain runs to 149 residues: MKVILTKDVEGWGTIGDIIDVKRGFARNYLIPKGFALEATESHIKHVQEILKQKARKLEREKAKAEEIAKQLEGLEIEIKKSVGTTGKLFGSVTTSDIAEVLKEKGIEVEKKKIMLRNPIKNIGSYNITIRLHPQVSATIKVHVTPENI.

This sequence belongs to the bacterial ribosomal protein bL9 family.

Functionally, binds to the 23S rRNA. This Persephonella marina (strain DSM 14350 / EX-H1) protein is Large ribosomal subunit protein bL9.